Consider the following 291-residue polypeptide: Undecaprenyl-diphosphatase (291 aa).

8 helical membrane-spanning segments follow: residues 1–21, 48–68, 102–122, 126–146, 162–182, 203–223, 231–251, and 267–287; these read MFII…LTEF, SAFT…AWVF, LHVL…DDFI, LFSV…MIIA, ISYF…WPGF, SDFT…LSLL, IADI…GLIA, and FAIY…GFGI.

Belongs to the UppP family.

The protein localises to the cell membrane. It carries out the reaction di-trans,octa-cis-undecaprenyl diphosphate + H2O = di-trans,octa-cis-undecaprenyl phosphate + phosphate + H(+). Functionally, catalyzes the dephosphorylation of undecaprenyl diphosphate (UPP). Confers resistance to bacitracin. This chain is Undecaprenyl-diphosphatase, found in Staphylococcus aureus (strain MRSA252).